A 212-amino-acid polypeptide reads, in one-letter code: Ribonuclease HII (212 aa).

The region spanning 7–212 (SQILGIDEAG…TIENITKSTE (206 aa)) is the RNase H type-2 domain. 3 residues coordinate a divalent metal cation: aspartate 13, glutamate 14, and aspartate 111.

The protein belongs to the RNase HII family. The cofactor is Mn(2+). Requires Mg(2+) as cofactor.

The protein localises to the cytoplasm. It catalyses the reaction Endonucleolytic cleavage to 5'-phosphomonoester.. Endonuclease that specifically degrades the RNA of RNA-DNA hybrids. This chain is Ribonuclease HII, found in Methanosphaera stadtmanae (strain ATCC 43021 / DSM 3091 / JCM 11832 / MCB-3).